The sequence spans 589 residues: Probable arginine--tRNA ligase, cytoplasmic (589 aa).

L-arginine is bound by residues 121–123, His-132, Tyr-332, Asp-336, and Gln-360; that span reads SPN. Residues 121–132 carry the 'HIGH' region motif; the sequence is SPNIAKPFHAGH. Positions 469–483 are interaction with tRNA; it reads DTGPYLQYAHARLCS.

This sequence belongs to the class-I aminoacyl-tRNA synthetase family.

It localises to the cytoplasm. The protein localises to the cytosol. It catalyses the reaction tRNA(Arg) + L-arginine + ATP = L-arginyl-tRNA(Arg) + AMP + diphosphate. Its function is as follows. Forms part of a macromolecular complex that catalyzes the attachment of specific amino acids to cognate tRNAs during protein synthesis. This chain is Probable arginine--tRNA ligase, cytoplasmic (argS1), found in Dictyostelium discoideum (Social amoeba).